We begin with the raw amino-acid sequence, 400 residues long: Subtilisin-like protease CPC735_047380 (400 aa).

A signal peptide spans 1–19 (MARINVVVSFLAALAVVQA). The propeptide occupies 20–118 (AQLLNLDGQK…IEPQRTFRAF (99 aa)). Positions 35 to 116 (SYVVVMNDGL…NYIEPQRTFR (82 aa)) constitute an Inhibitor I9 domain. The Peptidase S8 domain occupies 128 to 400 (SWGLGRISHT…DKLLYNGSGQ (273 aa)). Asparagine 153 carries an N-linked (GlcNAc...) asparagine glycan. Catalysis depends on charge relay system residues aspartate 160 and histidine 191. Residues asparagine 244 and asparagine 252 are each glycosylated (N-linked (GlcNAc...) asparagine). Residue serine 346 is the Charge relay system of the active site. The N-linked (GlcNAc...) asparagine glycan is linked to asparagine 396.

The protein belongs to the peptidase S8 family.

It is found in the secreted. Its function is as follows. Secreted subtilisin-like serine protease with keratinolytic activity that contributes to pathogenicity. This Coccidioides posadasii (strain C735) (Valley fever fungus) protein is Subtilisin-like protease CPC735_047380.